A 440-amino-acid polypeptide reads, in one-letter code: NK1 transcription factor-related protein 1 (440 aa).

The span at 1-13 (MSTSGPAAPGDVP) shows a compositional bias: low complexity. Disordered stretches follow at residues 1–82 (MSTS…RPTS), 145–291 (GVAA…PRRA), and 342–387 (KWKK…PMGA). The span at 14-31 (ALPPPPPGPGSGPAPPAP) shows a compositional bias: pro residues. Composition is skewed to low complexity over residues 62 to 74 (VPAV…AARP) and 145 to 158 (GVAA…TSAG). The span at 170 to 181 (GYSSGSGRSPTA) shows a compositional bias: polar residues. Over residues 182–198 (DSEDEAPEDEDEEEAPE) the composition is skewed to acidic residues. The segment covering 210 to 222 (GGSGGLGARGSGC) has biased composition (gly residues). Over residues 237-269 (AAPGPRGNSPGAPGPPATATGAGSAGSTPQGAA) the composition is skewed to low complexity. The segment at residues 288 to 347 (PRRARTAFTYEQLVALENKFKATRYLSVCERLNLALSLSLTETQVKIWFQNRRTKWKKQN) is a DNA-binding region (homeobox). The span at 356–374 (TGGGGGPGPGAGPGAGLPG) shows a compositional bias: gly residues.

Belongs to the NK-1 homeobox family.

The protein localises to the nucleus. May be required for the coordinated crosstalk of factors involved in the maintenance of energy homeostasis, possibly by regulating the transcription of specific factors involved in energy balance. The chain is NK1 transcription factor-related protein 1 from Mus musculus (Mouse).